Reading from the N-terminus, the 75-residue chain is Putative sulfur carrier protein MJ0990 (75 aa).

C15 serves as the catalytic Cysteine persulfide intermediate.

It belongs to the sulfur carrier protein TusA family.

The chain is Putative sulfur carrier protein MJ0990 from Methanocaldococcus jannaschii (strain ATCC 43067 / DSM 2661 / JAL-1 / JCM 10045 / NBRC 100440) (Methanococcus jannaschii).